A 159-amino-acid chain; its full sequence is Large ribosomal subunit protein mL50 (159 aa).

Belongs to the mitochondrion-specific ribosomal protein mL50 family. Component of the mitochondrial ribosome large subunit (39S) which comprises a 16S rRNA and about 50 distinct proteins.

The protein localises to the mitochondrion. The chain is Large ribosomal subunit protein mL50 (Mrpl50) from Mus musculus (Mouse).